The sequence spans 509 residues: Maturase K (509 aa).

It belongs to the intron maturase 2 family. MatK subfamily.

It localises to the plastid. The protein resides in the chloroplast. Usually encoded in the trnK tRNA gene intron. Probably assists in splicing its own and other chloroplast group II introns. The sequence is that of Maturase K from Schlumbergera truncata (Thanksgiving cactus).